A 160-amino-acid chain; its full sequence is G-protein-signaling modulator 3 (160 aa).

The tract at residues 1–55 (MEAERPQEEEDGEQGPPQDEEGWPPPNSTTRPWRSAPPSPPPPGTRHTALGPRSA) is disordered. The span at 7 to 22 (QEEEDGEQGPPQDEEG) shows a compositional bias: acidic residues. Residues Ser-35, Ser-39, Ser-56, and Ser-59 each carry the phosphoserine modification. The span at 35–44 (SAPPSPPPPG) shows a compositional bias: pro residues. Thr-62 carries the phosphothreonine modification. GoLoco domains lie at 62–84 (TELL…RATF), 104–126 (REQL…RSEP), and 132–155 (GQEL…RSRP).

Expressed in heart, placenta, lung and liver.

The protein resides in the cytoplasm. Interacts with subunit of G(i) alpha proteins and regulates the activation of G(i) alpha proteins. The sequence is that of G-protein-signaling modulator 3 (GPSM3) from Homo sapiens (Human).